A 317-amino-acid chain; its full sequence is Apolipoprotein E (317 aa).

An N-terminal signal peptide occupies residues 1 to 18; the sequence is MKVLWAALLVTFLAGCQA. Residues Thr26 and Thr36 are each glycosylated (O-linked (GalNAc...) threonine). A run of 8 repeats spans residues 80 to 101, 102 to 123, 124 to 145, 146 to 167, 168 to 189, 190 to 211, 212 to 233, and 234 to 255. Positions 80 to 255 are 8 X 22 AA approximate tandem repeats; it reads ALMDETMKEL…RLDEVKEQVA (176 aa). N-linked (Glc) (glycation) lysine glycosylation is present at Lys93. Residue Met143 is modified to Methionine sulfoxide. The residue at position 147 (Ser147) is a Phosphoserine; by FAM20C. An LDL and other lipoprotein receptors binding region spans residues 158–168; sequence HLRKLRKRLLR. Residue 162 to 165 coordinates heparin; the sequence is LRKR. The tract at residues 210 to 290 is lipid-binding and lipoprotein association; the sequence is AATVGSLAGQ…SWFEPLVEDM (81 aa). Thr212 carries O-linked (GalNAc...) threonine glycosylation. 229 to 236 is a binding site for heparin; that stretch reads GERLRARM. Positions 266 to 317 are homooligomerization; sequence QQIRLQAEAFQARLKSWFEPLVEDMQRQWAGLVEKVQAAVGTSAAPVPSDNH. Positions 278–290 are specificity for association with VLDL; sequence RLKSWFEPLVEDM. Thr307 is a glycosylation site (O-linked (GalNAc...) threonine). O-linked (GalNAc...) serine glycosylation is found at Ser308 and Ser314.

This sequence belongs to the apolipoprotein A1/A4/E family. As to quaternary structure, homotetramer. May interact with ABCA1; functionally associated with ABCA1 in the biogenesis of HDLs. May interact with APP/A4 amyloid-beta peptide; the interaction is extremely stable in vitro but its physiological significance is unclear. May interact with MAPT. May interact with MAP2. In the cerebrospinal fluid, interacts with secreted SORL1. Interacts with PMEL; this allows the loading of PMEL luminal fragment on ILVs to induce fibril nucleation. (Microbial infection) Interacts with hepatitis C virus (HCV) envelope glycoprotein E2; this interaction is required for HCV infectivity and production. Post-translationally, APOE exists as multiple glycosylated and sialylated glycoforms within cells and in plasma. The extent of glycosylation and sialylation are tissue and context specific. Plasma APOE undergoes desialylation and is less glycosylated and sialylated than the cellular form. Glycosylation is not required for proper expression and secretion. O-glycosylated with core 1 or possibly core 8 glycans. Thr-307 and Ser-314 are minor glycosylation sites compared to Ser-308. Glycated in plasma VLDL of normal subjects, and of hyperglycemic diabetic patients at a higher level (2-3 fold). In terms of processing, phosphorylated by FAM20C in the extracellular medium. Post-translationally, undergoes C-terminal proteolytic processing in neurons. C-terminally truncated APOE has a tendency to form neurotoxic intracellular neurofibrillary tangle-like inclusions in neurons. Produced by several tissues and cell types and mainly found associated with lipid particles in the plasma, the interstitial fluid and lymph. Mainly synthesized by liver hepatocytes. Significant quantities are also produced in brain, mainly by astrocytes and glial cells in the cerebral cortex, but also by neurons in frontal cortex and hippocampus. It is also expressed by cells of the peripheral nervous system. Also expressed by adrenal gland, testis, ovary, skin, kidney, spleen and adipose tissue and macrophages in various tissues.

The protein localises to the secreted. It localises to the extracellular space. The protein resides in the extracellular matrix. Its subcellular location is the extracellular vesicle. It is found in the endosome. The protein localises to the multivesicular body. APOE is an apolipoprotein, a protein associating with lipid particles, that mainly functions in lipoprotein-mediated lipid transport between organs via the plasma and interstitial fluids. APOE is a core component of plasma lipoproteins and is involved in their production, conversion and clearance. Apolipoproteins are amphipathic molecules that interact both with lipids of the lipoprotein particle core and the aqueous environment of the plasma. As such, APOE associates with chylomicrons, chylomicron remnants, very low density lipoproteins (VLDL) and intermediate density lipoproteins (IDL) but shows a preferential binding to high-density lipoproteins (HDL). It also binds a wide range of cellular receptors including the LDL receptor/LDLR, the LDL receptor-related proteins LRP1, LRP2 and LRP8 and the very low-density lipoprotein receptor/VLDLR that mediate the cellular uptake of the APOE-containing lipoprotein particles. Finally, APOE also has a heparin-binding activity and binds heparan-sulfate proteoglycans on the surface of cells, a property that supports the capture and the receptor-mediated uptake of APOE-containing lipoproteins by cells. A main function of APOE is to mediate lipoprotein clearance through the uptake of chylomicrons, VLDLs, and HDLs by hepatocytes. APOE is also involved in the biosynthesis by the liver of VLDLs as well as their uptake by peripheral tissues ensuring the delivery of triglycerides and energy storage in muscle, heart and adipose tissues. By participating in the lipoprotein-mediated distribution of lipids among tissues, APOE plays a critical role in plasma and tissues lipid homeostasis. APOE is also involved in two steps of reverse cholesterol transport, the HDLs-mediated transport of cholesterol from peripheral tissues to the liver, and thereby plays an important role in cholesterol homeostasis. First, it is functionally associated with ABCA1 in the biogenesis of HDLs in tissues. Second, it is enriched in circulating HDLs and mediates their uptake by hepatocytes. APOE also plays an important role in lipid transport in the central nervous system, regulating neuron survival and sprouting. APOE is also involved in innate and adaptive immune responses, controlling for instance the survival of myeloid-derived suppressor cells. Binds to the immune cell receptor LILRB4. APOE may also play a role in transcription regulation through a receptor-dependent and cholesterol-independent mechanism, that activates MAP3K12 and a non-canonical MAPK signal transduction pathway that results in enhanced AP-1-mediated transcription of APP. Its function is as follows. (Microbial infection) Through its interaction with HCV envelope glycoprotein E2, participates in the attachment of HCV to HSPGs and other receptors (LDLr, VLDLr, and SR-B1) on the cell surface and to the assembly, maturation and infectivity of HCV viral particles. This interaction is probably promoted via the up-regulation of cellular autophagy by the virus. The polypeptide is Apolipoprotein E (Homo sapiens (Human)).